Here is a 206-residue protein sequence, read N- to C-terminus: Pyridoxal 5'-phosphate synthase subunit PdxT (206 aa).

Residue 59–61 (GES) participates in L-glutamine binding. The active-site Nucleophile is C91. L-glutamine is bound by residues R123 and 151 to 152 (IR). Catalysis depends on charge relay system residues H187 and E189.

It belongs to the glutaminase PdxT/SNO family. In the presence of PdxS, forms a dodecamer of heterodimers. Only shows activity in the heterodimer.

It carries out the reaction aldehydo-D-ribose 5-phosphate + D-glyceraldehyde 3-phosphate + L-glutamine = pyridoxal 5'-phosphate + L-glutamate + phosphate + 3 H2O + H(+). The catalysed reaction is L-glutamine + H2O = L-glutamate + NH4(+). It participates in cofactor biosynthesis; pyridoxal 5'-phosphate biosynthesis. Functionally, catalyzes the hydrolysis of glutamine to glutamate and ammonia as part of the biosynthesis of pyridoxal 5'-phosphate. The resulting ammonia molecule is channeled to the active site of PdxS. The chain is Pyridoxal 5'-phosphate synthase subunit PdxT from Mycobacterium sp. (strain KMS).